The following is a 1015-amino-acid chain: MSRRNRNNYLSIAAVRTIGLDFIEMLEETNRRSISDRNTLTDIYNTEFRDRDGGVKDPNFSRVLYALRNANKARLSRTGRVYFNTNVRTGLHDQWFRPRRRQQNQANATPGNVSSVTPSSDQGPSCPESGVRARRKLVKYILQRLNTTDRSHFIADKWGVRVSSELYIEDGKIRISVDEAEVYELKLFVENTGQEAVYFTYYTALCWLQYFTLEDSRKVTRNNPLRLEPREKYEVIVRFKSSHVGVYSATLAFEFKKNTQPTTRSFHIVRFIEAEYRSKLAALLGPTEPYKPLRLNISEPENCIIDEGFPPDGYLQNFLVNVLPLGKYIPPPDTTILAELLKEDCSSRIFRGKLKDLQSLLQSPLTFDNYAERFDLLLYLEECQMHVDIKRYNKDSVTLHRDRDKRLMGLNLPGVSENRPSVLRGDHLLLTKSEEVTFSNVTKYKGYVHRVELDQVKLGLSKRFLKDVYIDKMKFRVEFTVNRIPVRLQHRAVHMAVQHNLKDVLFPMASRSLNPVSPPALRLFDRKLEYNFQQYSAVCNIVAGTSKPAPYLVFGPPGTGKTVTIVEAIKQVEKNIPDAYILACAPSNSAADQLCEKLITSEHVDAHKIYRLYASSRNQKDIPKILKDNCNVDEEMIDFPCKEDLMSYKILICTLVTAGRLVTGGFSEDHFTHNFVDEAGHAVESETIISVAGLLNAEKGQLVLAGDPKQLGPILRSPLAINHGLDVSLLERLMTQNDLYKRGDVEFDNRYVSKLIMNYRSHPYILEVPNRLFYDGELKACADEISSNQYCMWEHLPSKGFPVIFHGVPGKDERESNSPSFFNIYEINILVDYLKKLLLTQPKKGISRIFPKDIGIIAPYRKQVEKIKRAIDADKDFQDYMGIDNLKVGSVEEFQGQERKVIMVSTVRSSVKYISLDETFNIGFLKNEKRFNVAVTRAKSLLIMVGNPMILRTDESWGRFIDFCLERGGYTGISITSVERIDDVESRLLALNIQDEETEESPVQRYVDPEFRNDY.

Residues 94–130 (QWFRPRRRQQNQANATPGNVSSVTPSSDQGPSCPESG) form a disordered region. The span at 109–123 (TPGNVSSVTPSSDQG) shows a compositional bias: polar residues. 555-562 (GPPGTGKT) provides a ligand contact to ATP. The short motif at 677 to 680 (DEAG) is the DEAG box element.

The protein belongs to the DNA2/NAM7 helicase family. SDE3 subfamily.

It localises to the cytoplasm. Its subcellular location is the P-body. The enzyme catalyses ATP + H2O = ADP + phosphate + H(+). Probable RNA helicase. Required for RNA-mediated gene silencing by the RNA-induced silencing complex (RISC). Required for both miRNA-mediated translational repression and miRNA-mediated cleavage of complementary mRNAs by RISC. The polypeptide is Putative helicase mov-10-B.2 (mov10b.2) (Danio rerio (Zebrafish)).